A 2207-amino-acid polypeptide reads, in one-letter code: Mediator of RNA polymerase II transcription subunit 13-like (2207 aa).

The span at 337 to 355 shows a compositional bias: polar residues; the sequence is VQSAASHLGSQDGGMSTMH. Disordered regions lie at residues 337–368, 384–403, 431–479, and 519–574; these read VQSAASHLGSQDGGMSTMHSPKRSRKTPPKLH, AQSKRSQMSTPTREEEAAHS, VGPS…KRPL, and KYDK…VPVN. Residues 356–368 are compositionally biased toward basic residues; the sequence is SPKRSRKTPPKLH. The segment covering 384-394 has biased composition (polar residues); it reads AQSKRSQMSTP. Over residues 442-453 the composition is skewed to low complexity; sequence PGFSAGLPSSSS. A compositionally biased stretch (basic and acidic residues) spans 463 to 475; sequence KTTERQEKGDKLQ. Residues 528–539 are compositionally biased toward polar residues; it reads SRNTSKQMNLNP. Residues 546–555 show a composition bias toward pro residues; the sequence is PISPLPPTLS. Residues S548 and S555 each carry the phosphoserine modification. The short motif at 664–668 is the LXXLL motif 1 element; that stretch reads LQRLL. Positions 731–747 are enriched in basic and acidic residues; it reads GTEKDSLKKNKSEDGFG. A disordered region spans residues 731-767; sequence GTEKDSLKKNKSEDGFGTKDVTTPGHSTPVPDGKNAM. 2 positions are modified to phosphoserine: S812 and S821. Positions 816–847 are disordered; that stretch reads ELGAVSPALRSSKMPTVGTEERPPGKDGRAAG. Residues 834–844 are compositionally biased toward basic and acidic residues; the sequence is TEERPPGKDGR. S918 bears the Phosphoserine mark. Residues 1004–1091 are disordered; it reads DPDYVNTPQM…STTRPLNSVE (88 aa). A compositionally biased stretch (polar residues) spans 1009–1019; that stretch reads NTPQMNTPVTL. Residues 1020–1031 show a composition bias toward low complexity; that stretch reads NSAAPASNSGAG. The span at 1072–1087 shows a compositional bias: polar residues; that stretch reads TDQGSPASTPSTTRPL. Residues 1224 to 1228 carry the LXXLL motif 2 motif; it reads LLLLL. Residues 1379-1400 form a leucine-zipper region; that stretch reads LPIPTLLVGYDKEFLTISPFSL. Disordered regions lie at residues 1523–1652 and 2042–2077; these read LMPP…SVTE and GNLHSSPNSSPVPSPGSPSGIGVGSHFQHSRSQGER. Positions 1541–1593 are enriched in low complexity; sequence PGNAGSLPSNSGSGAPPAGSAFNPTSSSSANPTTSSSSASSGPPGSSAASAPG. Polar residues-rich tracts occupy residues 1612–1624 and 1635–1649; these read QNPSAGGSSTDRT and PGQSCTQSSQDGQDS. Phosphoserine is present on S2080.

This sequence belongs to the Mediator complex subunit 13 family. In terms of assembly, component of the Mediator complex, which is composed of MED1, MED4, MED6, MED7, MED8, MED9, MED10, MED11, MED12, MED13, MED13L, MED14, MED15, MED16, MED17, MED18, MED19, MED20, MED21, MED22, MED23, MED24, MED25, MED26, MED27, MED29, MED30, MED31, CCNC, CDK8 and CDC2L6/CDK11. The MED12, MED13, CCNC and CDK8 subunits form a distinct module termed the CDK8 module. Mediator containing the CDK8 module is less active than Mediator lacking this module in supporting transcriptional activation. Individual preparations of the Mediator complex lacking one or more distinct subunits have been variously termed ARC, CRSP, DRIP, PC2, SMCC and TRAP. In terms of tissue distribution, highly expressed in heart and weakly expressed in brain, spleen, lung, liver, kidney and testis.

It is found in the nucleus. Functionally, component of the Mediator complex, a coactivator involved in the regulated transcription of nearly all RNA polymerase II-dependent genes. Mediator functions as a bridge to convey information from gene-specific regulatory proteins to the basal RNA polymerase II transcription machinery. Mediator is recruited to promoters by direct interactions with regulatory proteins and serves as a scaffold for the assembly of a functional preinitiation complex with RNA polymerase II and the general transcription factors. This subunit may specifically regulate transcription of targets of the Wnt signaling pathway and SHH signaling pathway. This is Mediator of RNA polymerase II transcription subunit 13-like (Med13l) from Mus musculus (Mouse).